We begin with the raw amino-acid sequence, 421 residues long: Ig-like V-type domain-containing protein FAM187A (421 aa).

The first 18 residues, 1 to 18 (MNLAHTTVLLWAWGSLQA), serve as a signal peptide directing secretion. At 19–377 (FEIVEKENIF…VSFSDPETRA (359 aa)) the chain is on the extracellular side. The region spanning 268–362 (PWLPQVPIQF…IAGFRLGVTS (95 aa)) is the Ig-like V-type domain. Residues Cys-290 and Cys-346 are joined by a disulfide bond. Asn-318 carries N-linked (GlcNAc...) asparagine glycosylation. A helical transmembrane segment spans residues 378 to 398 (ALGLILIGYMLITVIFISIHL). Residues 399–421 (CRCCCYLFRFCPNFSPRLSRPQL) lie on the Cytoplasmic side of the membrane.

Belongs to the FAM187 family.

The protein resides in the membrane. The sequence is that of Ig-like V-type domain-containing protein FAM187A (FAM187A) from Bos taurus (Bovine).